We begin with the raw amino-acid sequence, 458 residues long: Argininosuccinate lyase (458 aa).

It belongs to the lyase 1 family. Argininosuccinate lyase subfamily.

It localises to the cytoplasm. The catalysed reaction is 2-(N(omega)-L-arginino)succinate = fumarate + L-arginine. Its pathway is amino-acid biosynthesis; L-arginine biosynthesis; L-arginine from L-ornithine and carbamoyl phosphate: step 3/3. The chain is Argininosuccinate lyase from Pelobacter propionicus (strain DSM 2379 / NBRC 103807 / OttBd1).